We begin with the raw amino-acid sequence, 116 residues long: Ribonuclease P protein component (116 aa).

Belongs to the RnpA family. In terms of assembly, consists of a catalytic RNA component (M1 or rnpB) and a protein subunit.

It catalyses the reaction Endonucleolytic cleavage of RNA, removing 5'-extranucleotides from tRNA precursor.. Its function is as follows. RNaseP catalyzes the removal of the 5'-leader sequence from pre-tRNA to produce the mature 5'-terminus. It can also cleave other RNA substrates such as 4.5S RNA. The protein component plays an auxiliary but essential role in vivo by binding to the 5'-leader sequence and broadening the substrate specificity of the ribozyme. This chain is Ribonuclease P protein component, found in Caldanaerobacter subterraneus subsp. tengcongensis (strain DSM 15242 / JCM 11007 / NBRC 100824 / MB4) (Thermoanaerobacter tengcongensis).